A 264-amino-acid polypeptide reads, in one-letter code: Thymidylate synthase (264 aa).

A dUMP-binding site is contributed by Arg-21. His-51 is a (6R)-5,10-methylene-5,6,7,8-tetrahydrofolate binding site. Arg-126–Arg-127 provides a ligand contact to dUMP. The active-site Nucleophile is Cys-146. Residues Arg-166–Asp-169, Asn-177, and His-207–Tyr-209 each bind dUMP. (6R)-5,10-methylene-5,6,7,8-tetrahydrofolate is bound at residue Asp-169. Residue Ala-263 participates in (6R)-5,10-methylene-5,6,7,8-tetrahydrofolate binding.

This sequence belongs to the thymidylate synthase family. Bacterial-type ThyA subfamily. Homodimer.

The protein resides in the cytoplasm. The catalysed reaction is dUMP + (6R)-5,10-methylene-5,6,7,8-tetrahydrofolate = 7,8-dihydrofolate + dTMP. It functions in the pathway pyrimidine metabolism; dTTP biosynthesis. In terms of biological role, catalyzes the reductive methylation of 2'-deoxyuridine-5'-monophosphate (dUMP) to 2'-deoxythymidine-5'-monophosphate (dTMP) while utilizing 5,10-methylenetetrahydrofolate (mTHF) as the methyl donor and reductant in the reaction, yielding dihydrofolate (DHF) as a by-product. This enzymatic reaction provides an intracellular de novo source of dTMP, an essential precursor for DNA biosynthesis. The polypeptide is Thymidylate synthase (Bartonella quintana (strain Toulouse) (Rochalimaea quintana)).